A 539-amino-acid polypeptide reads, in one-letter code: Phosphoenolpyruvate carboxykinase (ATP) (539 aa).

The substrate site is built by arginine 64, tyrosine 206, and lysine 212. Residues lysine 212, histidine 231, and 247 to 255 (GLSGTGKTT) contribute to the ATP site. Mn(2+) is bound by residues lysine 212 and histidine 231. Residue aspartate 268 coordinates Mn(2+). ATP is bound by residues glutamate 296, arginine 332, 448–449 (RI), and threonine 454. Arginine 332 is a substrate binding site.

The protein belongs to the phosphoenolpyruvate carboxykinase (ATP) family. Monomer. The cofactor is Mn(2+).

Its subcellular location is the cytoplasm. The catalysed reaction is oxaloacetate + ATP = phosphoenolpyruvate + ADP + CO2. It functions in the pathway carbohydrate biosynthesis; gluconeogenesis. In terms of biological role, involved in the gluconeogenesis. Catalyzes the conversion of oxaloacetate (OAA) to phosphoenolpyruvate (PEP) through direct phosphoryl transfer between the nucleoside triphosphate and OAA. This Citrobacter koseri (strain ATCC BAA-895 / CDC 4225-83 / SGSC4696) protein is Phosphoenolpyruvate carboxykinase (ATP).